The sequence spans 318 residues: Nodulation protein D 2 (318 aa).

The region spanning 6–63 (LDLNLLVALDALTTERNLTAAARSINLSQPAMSAAIGRLRDYFRDELFTMNGRELRLT) is the HTH lysR-type domain. The H-T-H motif DNA-binding region spans 23–42 (LTAAARSINLSQPAMSAAIG).

Belongs to the LysR transcriptional regulatory family.

Its function is as follows. NodD regulates the expression of the nodABCFE genes which encode other nodulation proteins. NodD is also a negative regulator of its own expression. Binds flavonoids as inducers. The chain is Nodulation protein D 2 (nodD2) from Rhizobium leguminosarum bv. phaseoli.